The following is a 1025-amino-acid chain: Multidrug resistance protein MdtC (1025 aa).

12 helical membrane-spanning segments follow: residues 3 to 23 (FFALFIYRPVATILLSVAITL), 333 to 353 (EVEQTLIISVALVILVVFLFL), 360 to 380 (IIPAVAVPVSLIGTFAAMYLC), 387 to 407 (LSLMALTIATGFVVDDAIVVL), 431 to 451 (VGFTVLSMSLSLVAVFLPLLL), 463 to 483 (FAVTLSVAIGISLLVSLTLTP), 528 to 548 (LVGVVLLGTIALNIWLYISIP), 853 to 873 (VILIIAAIATVYIVLGILYES), 875 to 895 (VHPLTILSTLPSAGVGALLAL), 897 to 917 (LFNAPFSLIALIGIMLLIGIV), 953 to 973 (PIMMTTLAALFGALPLVLSGG), and 984 to 1004 (ITIVGGLVMSQLLTLYTTPVV).

Belongs to the resistance-nodulation-cell division (RND) (TC 2.A.6) family. MdtC subfamily. As to quaternary structure, part of a tripartite efflux system composed of MdtA, MdtB and MdtC. MdtC forms a heteromultimer with MdtB.

The protein localises to the cell inner membrane. In terms of biological role, the MdtABC tripartite complex confers resistance against novobiocin and deoxycholate. This chain is Multidrug resistance protein MdtC, found in Escherichia coli O17:K52:H18 (strain UMN026 / ExPEC).